A 406-amino-acid chain; its full sequence is L-cysteine:1D-myo-inositol 2-amino-2-deoxy-alpha-D-glucopyranoside ligase (406 aa).

Residue Cys45 coordinates Zn(2+). Residues 45-48 (CGIT), Thr60, and 83-85 (NIT) contribute to the L-cysteinyl-5'-AMP site. Residues 47–57 (ITPYDATHMGH) carry the 'HIGH' region motif. The short motif at 185 to 190 (ERGGDP) is the 'ERGGDP' region element. Trp225 provides a ligand contact to L-cysteinyl-5'-AMP. Cys229 contributes to the Zn(2+) binding site. 247-249 (GSD) is a binding site for L-cysteinyl-5'-AMP. Residue His254 participates in Zn(2+) binding. Val281 contributes to the L-cysteinyl-5'-AMP binding site. A 'KMSKS' region motif is present at residues 287–291 (KMSKS).

It belongs to the class-I aminoacyl-tRNA synthetase family. MshC subfamily. Monomer. It depends on Zn(2+) as a cofactor.

It catalyses the reaction 1D-myo-inositol 2-amino-2-deoxy-alpha-D-glucopyranoside + L-cysteine + ATP = 1D-myo-inositol 2-(L-cysteinylamino)-2-deoxy-alpha-D-glucopyranoside + AMP + diphosphate + H(+). In terms of biological role, catalyzes the ATP-dependent condensation of GlcN-Ins and L-cysteine to form L-Cys-GlcN-Ins. This is L-cysteine:1D-myo-inositol 2-amino-2-deoxy-alpha-D-glucopyranoside ligase from Kribbella flavida (strain DSM 17836 / JCM 10339 / NBRC 14399).